The chain runs to 589 residues: Putative ABC transporter ATP-binding protein MG015 (589 aa).

The next 6 membrane-spanning stretches (helical) occupy residues 9 to 29, 66 to 86, 161 to 181, 251 to 271, 280 to 300, and 303 to 323; these read LLYV…NPIL, LTIV…FNVA, LIFL…ATLI, IFLF…SISI, IPSF…IASL, and ITLA…GVVS. Residues 9–319 enclose the ABC transmembrane type-1 domain; that stretch reads LLYVFLCIVL…IFTLWNLVQL (311 aa). An ABC transporter domain is found at 352 to 586; that stretch reads IRFENVAFGY…NGFYARLKQS (235 aa). 385-392 contributes to the ATP binding site; the sequence is GPTGAGKS.

It belongs to the ABC transporter superfamily.

It is found in the cell membrane. The protein is Putative ABC transporter ATP-binding protein MG015 of Mycoplasma genitalium (strain ATCC 33530 / DSM 19775 / NCTC 10195 / G37) (Mycoplasmoides genitalium).